A 152-amino-acid polypeptide reads, in one-letter code: MAERFKILVLNGPNLNLLGQREPELYGKQSLDDIADSLGAIAKQHATALDFRQSNAEHQLIDWIQQAAKDSVDYIVINPAAYAHTSVALRDALLAVKIPFIEVHLSNIYRRESFRHHSYLADVADGVICGLGARGYEYALQAALTTLNNTDN.

Residue Tyr26 is the Proton acceptor of the active site. Residues Asn78, His84, and Asp91 each coordinate substrate. The active-site Proton donor is the His104. Residues 105-106 (LS) and Arg115 contribute to the substrate site.

The protein belongs to the type-II 3-dehydroquinase family. As to quaternary structure, homododecamer.

The enzyme catalyses 3-dehydroquinate = 3-dehydroshikimate + H2O. It participates in metabolic intermediate biosynthesis; chorismate biosynthesis; chorismate from D-erythrose 4-phosphate and phosphoenolpyruvate: step 3/7. Catalyzes a trans-dehydration via an enolate intermediate. This is 3-dehydroquinate dehydratase from Idiomarina loihiensis (strain ATCC BAA-735 / DSM 15497 / L2-TR).